The chain runs to 225 residues: Phosphoserine phosphatase (225 aa).

M1 carries the post-translational modification N-acetylmethionine. The Nucleophile role is filled by D20. The Mg(2+) site is built by D20 and D22. Residue 20 to 22 (DVD) participates in L-serine binding. The Proton donor role is filled by D22. M52 contacts O-phospho-L-serine. G53 provides a ligand contact to phosphate. L-serine-binding positions include 109–111 (SGG) and K158. Residues 109-111 (SGG) and K158 each bind O-phospho-L-serine. A Mg(2+)-binding site is contributed by D179. T182 serves as a coordination point for O-phospho-L-serine. T182 is a phosphate binding site.

It belongs to the HAD-like hydrolase superfamily. SerB family. In terms of assembly, homodimer. Mg(2+) is required as a cofactor.

Its subcellular location is the cytoplasm. The protein localises to the cytosol. The enzyme catalyses O-phospho-L-serine + H2O = L-serine + phosphate. It catalyses the reaction O-phospho-D-serine + H2O = D-serine + phosphate. It functions in the pathway amino-acid biosynthesis; L-serine biosynthesis; L-serine from 3-phospho-D-glycerate: step 3/3. Its activity is regulated as follows. Inhibited by calcium ions. Functionally, catalyzes the last irreversible step in the biosynthesis of L-serine from carbohydrates, the dephosphorylation of O-phospho-L-serine to L-serine. L-serine can then be used in protein synthesis, to produce other amino acids, in nucleotide metabolism or in glutathione synthesis, or can be racemized to D-serine, a neuromodulator. May also act on O-phospho-D-serine. This Homo sapiens (Human) protein is Phosphoserine phosphatase.